The following is a 65-amino-acid chain: Neurotoxin Bot2 (65 aa).

An LCN-type CS-alpha/beta domain is found at 2–64 (RDAYIAQPEN…VPIRIEGKCH (63 aa)). 4 cysteine pairs are disulfide-bonded: Cys-12-Cys-63, Cys-16-Cys-36, Cys-22-Cys-46, and Cys-26-Cys-48. A Phenylalanine amide modification is found at Phe-65.

Belongs to the long (4 C-C) scorpion toxin superfamily. Sodium channel inhibitor family. Alpha subfamily. Expressed by the venom gland.

Its subcellular location is the secreted. Binds to sodium channels (Nav) and inhibits the inactivation of the activated channels, thereby blocking neuronal transmission. The polypeptide is Neurotoxin Bot2 (Buthus occitanus tunetanus (Common European scorpion)).